A 276-amino-acid polypeptide reads, in one-letter code: Diaminopimelate epimerase (276 aa).

The substrate site is built by N11, Q44, and N64. Residue C73 is the Proton donor of the active site. Substrate contacts are provided by residues 74–75, N157, N190, and 208–209; these read GN and ER. The Proton acceptor role is filled by C217. Residue 218 to 219 coordinates substrate; it reads GS.

This sequence belongs to the diaminopimelate epimerase family. In terms of assembly, homodimer.

The protein localises to the cytoplasm. The catalysed reaction is (2S,6S)-2,6-diaminopimelate = meso-2,6-diaminopimelate. It functions in the pathway amino-acid biosynthesis; L-lysine biosynthesis via DAP pathway; DL-2,6-diaminopimelate from LL-2,6-diaminopimelate: step 1/1. Its function is as follows. Catalyzes the stereoinversion of LL-2,6-diaminopimelate (L,L-DAP) to meso-diaminopimelate (meso-DAP), a precursor of L-lysine and an essential component of the bacterial peptidoglycan. In Blochmanniella floridana, this protein is Diaminopimelate epimerase.